The following is a 225-amino-acid chain: Urease subunit alpha (225 aa).

A urease gamma region spans residues Met-1–Asp-102. The interval Asn-103–His-225 is urease beta.

The protein in the N-terminal section; belongs to the urease gamma subunit family. In the C-terminal section; belongs to the urease beta subunit family. In terms of assembly, heterohexamer of 3 UreA (alpha) and 3 UreB (beta) subunits.

It localises to the cytoplasm. The enzyme catalyses urea + 2 H2O + H(+) = hydrogencarbonate + 2 NH4(+). It participates in nitrogen metabolism; urea degradation; CO(2) and NH(3) from urea (urease route): step 1/1. The polypeptide is Urease subunit alpha (Helicobacter hepaticus (strain ATCC 51449 / 3B1)).